A 424-amino-acid chain; its full sequence is MFS-type transporter opdF (424 aa).

Positions 1–10 are enriched in basic and acidic residues; the sequence is MSDTSLEKGN. The segment at 1 to 23 is disordered; sequence MSDTSLEKGNEGPTAEAPKVAPP. The next 5 membrane-spanning stretches (helical) occupy residues 36-56, 102-122, 127-147, 160-180, and 187-207; these read VAGA…IALF, VPIA…SLST, LMLS…TPAM, IVGG…PLMV, and VGFG…LVFA. An N-linked (GlcNAc...) asparagine glycan is attached at N208. 6 helical membrane-spanning segments follow: residues 239 to 259, 265 to 285, 299 to 319, 329 to 349, 364 to 384, and 391 to 411; these read LCVA…YIVV, GMST…SFFG, FNVM…LWLP, FAAL…VLIV, VLAF…AIAA, and TYTC…LAAL.

This sequence belongs to the major facilitator superfamily. Monocarboxylate porter (TC 2.A.1.13) family.

Its subcellular location is the membrane. Its function is as follows. MFS-type transporter; part of the gene cluster that mediates the biosynthesis of oxopyrrolidines, polyketide-amino acid hybrid compounds with feature structures of tetramic acid. The sequence is that of MFS-type transporter opdF from Penicillium oxalicum (strain 114-2 / CGMCC 5302) (Penicillium decumbens).